The primary structure comprises 65 residues: Large ribosomal subunit protein bL35 (65 aa).

The segment at 1-47 (MPKIKTNRGAAKRFRKTASGKIKRNSAFTSHILTSKTRKRKRQLRSS) is disordered. Residues 10–24 (AAKRFRKTASGKIKR) are compositionally biased toward basic residues. Over residues 26 to 35 (SAFTSHILTS) the composition is skewed to polar residues.

This sequence belongs to the bacterial ribosomal protein bL35 family.

The chain is Large ribosomal subunit protein bL35 from Geobacter metallireducens (strain ATCC 53774 / DSM 7210 / GS-15).